We begin with the raw amino-acid sequence, 273 residues long: Large ribosomal subunit protein uL2 (273 aa).

The disordered stretch occupies residues 228–273 (VDHPHGGGEGKTSGGRHPVTPWGFPTKGKKTRKNKRTSKFIVKKRK). Over residues 254–273 (KGKKTRKNKRTSKFIVKKRK) the composition is skewed to basic residues.

This sequence belongs to the universal ribosomal protein uL2 family. As to quaternary structure, part of the 50S ribosomal subunit. Forms a bridge to the 30S subunit in the 70S ribosome.

Functionally, one of the primary rRNA binding proteins. Required for association of the 30S and 50S subunits to form the 70S ribosome, for tRNA binding and peptide bond formation. It has been suggested to have peptidyltransferase activity; this is somewhat controversial. Makes several contacts with the 16S rRNA in the 70S ribosome. The chain is Large ribosomal subunit protein uL2 from Rickettsia akari (strain Hartford).